Reading from the N-terminus, the 184-residue chain is Photosystem I assembly protein Ycf4 (184 aa).

The next 2 helical transmembrane spans lie at 22–42 (FCWA…GTSS) and 57–77 (IIFF…LFIS).

It belongs to the Ycf4 family.

It localises to the plastid. It is found in the chloroplast thylakoid membrane. Its function is as follows. Seems to be required for the assembly of the photosystem I complex. The sequence is that of Photosystem I assembly protein Ycf4 from Lobularia maritima (Sweet alyssum).